Reading from the N-terminus, the 318-residue chain is 4-hydroxy-3-methylbut-2-enyl diphosphate reductase (318 aa).

Position 21 (Cys-21) interacts with [4Fe-4S] cluster. The (2E)-4-hydroxy-3-methylbut-2-enyl diphosphate site is built by His-50 and His-83. 2 residues coordinate dimethylallyl diphosphate: His-50 and His-83. Residues His-50 and His-83 each contribute to the isopentenyl diphosphate site. Cys-105 serves as a coordination point for [4Fe-4S] cluster. His-133 is a (2E)-4-hydroxy-3-methylbut-2-enyl diphosphate binding site. His-133 is a dimethylallyl diphosphate binding site. His-133 lines the isopentenyl diphosphate pocket. Glu-135 functions as the Proton donor in the catalytic mechanism. Thr-176 lines the (2E)-4-hydroxy-3-methylbut-2-enyl diphosphate pocket. Cys-206 serves as a coordination point for [4Fe-4S] cluster. Ser-234, Ser-235, Asn-236, and Ser-278 together coordinate (2E)-4-hydroxy-3-methylbut-2-enyl diphosphate. Dimethylallyl diphosphate contacts are provided by Ser-234, Ser-235, Asn-236, and Ser-278. 4 residues coordinate isopentenyl diphosphate: Ser-234, Ser-235, Asn-236, and Ser-278.

This sequence belongs to the IspH family. It depends on [4Fe-4S] cluster as a cofactor.

It catalyses the reaction isopentenyl diphosphate + 2 oxidized [2Fe-2S]-[ferredoxin] + H2O = (2E)-4-hydroxy-3-methylbut-2-enyl diphosphate + 2 reduced [2Fe-2S]-[ferredoxin] + 2 H(+). The catalysed reaction is dimethylallyl diphosphate + 2 oxidized [2Fe-2S]-[ferredoxin] + H2O = (2E)-4-hydroxy-3-methylbut-2-enyl diphosphate + 2 reduced [2Fe-2S]-[ferredoxin] + 2 H(+). The protein operates within isoprenoid biosynthesis; dimethylallyl diphosphate biosynthesis; dimethylallyl diphosphate from (2E)-4-hydroxy-3-methylbutenyl diphosphate: step 1/1. Its pathway is isoprenoid biosynthesis; isopentenyl diphosphate biosynthesis via DXP pathway; isopentenyl diphosphate from 1-deoxy-D-xylulose 5-phosphate: step 6/6. Its function is as follows. Catalyzes the conversion of 1-hydroxy-2-methyl-2-(E)-butenyl 4-diphosphate (HMBPP) into a mixture of isopentenyl diphosphate (IPP) and dimethylallyl diphosphate (DMAPP). Acts in the terminal step of the DOXP/MEP pathway for isoprenoid precursor biosynthesis. This is 4-hydroxy-3-methylbut-2-enyl diphosphate reductase from Shewanella oneidensis (strain ATCC 700550 / JCM 31522 / CIP 106686 / LMG 19005 / NCIMB 14063 / MR-1).